The sequence spans 398 residues: Acetate kinase 1 (398 aa).

A Mg(2+)-binding site is contributed by N9. K16 lines the ATP pocket. A substrate-binding site is contributed by R89. D146 acts as the Proton donor/acceptor in catalysis. Residues 206–210 (HLGNG), 281–283 (DCR), and 329–333 (GIGEN) each bind ATP. E384 contributes to the Mg(2+) binding site.

This sequence belongs to the acetokinase family. In terms of assembly, homodimer. Mg(2+) serves as cofactor. Mn(2+) is required as a cofactor.

The protein localises to the cytoplasm. The catalysed reaction is acetate + ATP = acetyl phosphate + ADP. Its pathway is metabolic intermediate biosynthesis; acetyl-CoA biosynthesis; acetyl-CoA from acetate: step 1/2. Functionally, catalyzes the formation of acetyl phosphate from acetate and ATP. Can also catalyze the reverse reaction. The sequence is that of Acetate kinase 1 from Vibrio vulnificus (strain CMCP6).